A 388-amino-acid polypeptide reads, in one-letter code: Flavin-dependent monooxygenase (388 aa).

Residues 26 to 27 (PV) and 45 to 48 (YERD) each bind FAD. Residue arginine 54 participates in NADPH binding. FAD is bound by residues aspartate 61, arginine 117, and leucine 139. Glutamine 192 and arginine 213 together coordinate substrate. FAD is bound by residues aspartate 311 and 321-324 (GQGV).

The protein belongs to the aromatic-ring hydroxylase family. TetX subfamily. Monomer. The cofactor is FAD.

The protein resides in the cytoplasm. It carries out the reaction a tetracycline + NADPH + O2 + H(+) = an 11a-hydroxytetracycline + NADP(+) + H2O. It catalyses the reaction tetracycline + NADPH + O2 + H(+) = 11a-hydroxytetracycline + NADP(+) + H2O. The catalysed reaction is tigecycline + NADPH + O2 + H(+) = 11a-hydroxytigecycline + NADP(+) + H2O. The enzyme catalyses oxytetracycline + NADPH + O2 + H(+) = 11a-hydroxy-oxytetracycline + NADP(+) + H2O. With respect to regulation, anhydrotetracycline, a poor substrate, prevents tetracycline degradation in vitro. Functionally, an FAD-requiring monooxygenase active on tetracycline antibiotic derivatives, which leads to their inactivation. Hydroxylates carbon 11a of oxytetracycline and tigecycline. Acts on many tetracycline analogs (chlorotetracycline, demeclocycline, doxycycline, minocycline, oxytetracyclinee), probably by monooxygenization. Tigecycline, a new generation tetracycline antibiotic, is rendered less effective against E.coli by this monooxygenation, is much weaker at inhibiting translation in vitro and binds Mg(2+) considerably less well. Expression in E.coli BW25113 reduces its growth rate about 5%. The reaction probably proceeds by FAD reduction by NADPH and, second, hydroxylation of antibiotic in a ping-pong mechanism. Degrades chlortetracycline, probably by monooxygenation. Slowly oxidizes anhydrotetracycline, the final substrate in tetracycline biosynthesis. The protein is Flavin-dependent monooxygenase of Bacteroides thetaiotaomicron.